A 572-amino-acid chain; its full sequence is Proline--tRNA ligase (572 aa).

It belongs to the class-II aminoacyl-tRNA synthetase family. ProS type 1 subfamily. Homodimer.

It localises to the cytoplasm. The catalysed reaction is tRNA(Pro) + L-proline + ATP = L-prolyl-tRNA(Pro) + AMP + diphosphate. Catalyzes the attachment of proline to tRNA(Pro) in a two-step reaction: proline is first activated by ATP to form Pro-AMP and then transferred to the acceptor end of tRNA(Pro). As ProRS can inadvertently accommodate and process non-cognate amino acids such as alanine and cysteine, to avoid such errors it has two additional distinct editing activities against alanine. One activity is designated as 'pretransfer' editing and involves the tRNA(Pro)-independent hydrolysis of activated Ala-AMP. The other activity is designated 'posttransfer' editing and involves deacylation of mischarged Ala-tRNA(Pro). The misacylated Cys-tRNA(Pro) is not edited by ProRS. This is Proline--tRNA ligase from Serratia proteamaculans (strain 568).